The primary structure comprises 338 residues: Methionyl-tRNA formyltransferase (338 aa).

110 to 113 contacts (6S)-5,6,7,8-tetrahydrofolate; that stretch reads SLLP.

It belongs to the Fmt family.

It catalyses the reaction L-methionyl-tRNA(fMet) + (6R)-10-formyltetrahydrofolate = N-formyl-L-methionyl-tRNA(fMet) + (6S)-5,6,7,8-tetrahydrofolate + H(+). Attaches a formyl group to the free amino group of methionyl-tRNA(fMet). The formyl group appears to play a dual role in the initiator identity of N-formylmethionyl-tRNA by promoting its recognition by IF2 and preventing the misappropriation of this tRNA by the elongation apparatus. In Parasynechococcus marenigrum (strain WH8102), this protein is Methionyl-tRNA formyltransferase.